A 301-amino-acid polypeptide reads, in one-letter code: UDP-N-acetylenolpyruvoylglucosamine reductase (301 aa).

Residues 30-194 (VGGEADYLVF…LSVKFALAPG (165 aa)) form the FAD-binding PCMH-type domain. R173 is an active-site residue. The Proton donor role is filled by S223. E293 is a catalytic residue.

The protein belongs to the MurB family. The cofactor is FAD.

It localises to the cytoplasm. The enzyme catalyses UDP-N-acetyl-alpha-D-muramate + NADP(+) = UDP-N-acetyl-3-O-(1-carboxyvinyl)-alpha-D-glucosamine + NADPH + H(+). It participates in cell wall biogenesis; peptidoglycan biosynthesis. Functionally, cell wall formation. The protein is UDP-N-acetylenolpyruvoylglucosamine reductase of Streptococcus pneumoniae (strain 70585).